The following is a 114-amino-acid chain: UPF0145 protein Acry_1752 (114 aa).

Belongs to the UPF0145 family.

The polypeptide is UPF0145 protein Acry_1752 (Acidiphilium cryptum (strain JF-5)).